The primary structure comprises 279 residues: Replication protein A 32 kDa subunit A (279 aa).

The tract at residues 1–33 (MFSSSQFEPNSGFSGGGFMSSQPSQAYESSSST) is disordered. Positions 19-32 (MSSQPSQAYESSSS) are enriched in low complexity. Residues 73–148 (VSLVGLVCDK…QLLVFSVRPI (76 aa)) constitute a DNA-binding region (OB).

This sequence belongs to the replication factor A protein 2 family. Heterotrimer of RPA1, RPA2 and RPA3 (canonical replication protein A complex). Interacts with ROS1. Binds to ASE1/At3g02920, PDX2, At5g62350, RPA1A/At2g06510, ARF1/At1g10630, At4g18590 and At3g52630. In terms of processing, phosphorylated in a cell-cycle-dependent manner (from the S phase until mitosis). In response to DNA damage, recruited to DNA-repair nuclear foci, as a hypophosphorylated form. In terms of tissue distribution, strongly expressed in shoot and root meristems. Present in seedlings, roots, leaves, siliques and flowers.

It is found in the nucleus. Functionally, component of the replication protein A complex (RPA) required for DNA recombination, repair and replication. The activity of RPA is mediated by single-stranded DNA binding and protein interactions. Required fo cell division in meristems. Involved in the maintenance of transcriptional epigenetic gene silencing (TGS) at specific loci (including some transposons) by regulating histone H3 acetylation, 'Lys-4' and 'Lys-9' methylation. The polypeptide is Replication protein A 32 kDa subunit A (RPA2A) (Arabidopsis thaliana (Mouse-ear cress)).